Here is a 115-residue protein sequence, read N- to C-terminus: Large ribosomal subunit protein bL20c (115 aa).

It belongs to the bacterial ribosomal protein bL20 family.

It localises to the plastid. It is found in the chloroplast. Its function is as follows. Binds directly to 23S ribosomal RNA and is necessary for the in vitro assembly process of the 50S ribosomal subunit. It is not involved in the protein synthesizing functions of that subunit. The sequence is that of Large ribosomal subunit protein bL20c from Pyropia yezoensis (Susabi-nori).